Reading from the N-terminus, the 210-residue chain is Probable septum site-determining protein MinC (210 aa).

It belongs to the MinC family. Interacts with MinD and FtsZ.

Its function is as follows. Cell division inhibitor that blocks the formation of polar Z ring septums. Rapidly oscillates between the poles of the cell to destabilize FtsZ filaments that have formed before they mature into polar Z rings. Prevents FtsZ polymerization. The sequence is that of Probable septum site-determining protein MinC from Thermotoga petrophila (strain ATCC BAA-488 / DSM 13995 / JCM 10881 / RKU-1).